The primary structure comprises 192 residues: Protein GrpE (192 aa).

Positions 1 to 34 are disordered; the sequence is MSSKEQKTPNEQVSEEMENTAEQQVEATQETGEC. Over residues 20-31 the composition is skewed to polar residues; sequence TAEQQVEATQET.

This sequence belongs to the GrpE family. Homodimer.

It localises to the cytoplasm. Participates actively in the response to hyperosmotic and heat shock by preventing the aggregation of stress-denatured proteins, in association with DnaK and GrpE. It is the nucleotide exchange factor for DnaK and may function as a thermosensor. Unfolded proteins bind initially to DnaJ; upon interaction with the DnaJ-bound protein, DnaK hydrolyzes its bound ATP, resulting in the formation of a stable complex. GrpE releases ADP from DnaK; ATP binding to DnaK triggers the release of the substrate protein, thus completing the reaction cycle. Several rounds of ATP-dependent interactions between DnaJ, DnaK and GrpE are required for fully efficient folding. This is Protein GrpE from Yersinia pseudotuberculosis serotype I (strain IP32953).